The primary structure comprises 185 residues: Ribosome-recycling factor (185 aa).

Belongs to the RRF family.

It is found in the cytoplasm. Its function is as follows. Responsible for the release of ribosomes from messenger RNA at the termination of protein biosynthesis. May increase the efficiency of translation by recycling ribosomes from one round of translation to another. This Thermosipho melanesiensis (strain DSM 12029 / CIP 104789 / BI429) protein is Ribosome-recycling factor.